A 2340-amino-acid polypeptide reads, in one-letter code: Proto-oncogene tyrosine-protein kinase ROS (2340 aa).

Residues 1-28 form the signal peptide; that stretch reads MKNICWLTLKLVKFVVLGCIIWISVAQS. Residues 29 to 1854 lie on the Extracellular side of the membrane; it reads TVLSSCLTSC…EDGVWITETS (1826 aa). Asn-53 is a glycosylation site (N-linked (GlcNAc...) asparagine). Fibronectin type-III domains are found at residues 111-206 and 207-295; these read LPTA…VPET and APLI…PSPS. Asn-334 and Asn-362 each carry an N-linked (GlcNAc...) asparagine glycan. The Fibronectin type-III 3 domain maps to 567 to 667; that stretch reads LPGHPQEVSV…APSVGTTLVP (101 aa). N-linked (GlcNAc...) asparagine glycosylation is found at Asn-935 and Asn-1011. Fibronectin type-III domains are found at residues 943–1038 and 1039–1146; these read IPDP…SVPS and APEN…TSEI. Asn-1243 carries N-linked (GlcNAc...) asparagine glycosylation. Fibronectin type-III domains follow at residues 1442–1549, 1550–1649, 1651–1744, and 1745–1846; these read ASDM…TKSG, VPGA…VNMF, TPEK…TKAG, and VPSK…LVED. Asn-1676 carries N-linked (GlcNAc...) asparagine glycosylation. Residues 1855–1875 form a helical membrane-spanning segment; that stretch reads FILTIIVGIFLVATVPLTFVW. The Cytoplasmic segment spans residues 1876 to 2340; it reads HRSLKSHKAS…AHSEHGDVSE (465 aa). The region spanning 1938-2216 is the Protein kinase domain; sequence LSLRLLLGSG…QLQLFRNVFL (279 aa). ATP-binding positions include 1944–1952 and Lys-1973; that span reads LGSGAFGEV. The active-site Proton acceptor is Asp-2072. Tyr-2267 and Tyr-2327 each carry phosphotyrosine; by autocatalysis.

This sequence belongs to the protein kinase superfamily. Tyr protein kinase family. Insulin receptor subfamily. As to quaternary structure, interacts with PTPN11; may activate the PI3 kinase-mTOR signaling pathway. Interacts with VAV3; constitutive interaction mediating VAV3 phosphorylation. Interacts with PTPN6 (via SH2 1 domain); the interaction is direct and promotes ROS1 dephosphorylation. Phosphorylated. Probably autophosphorylates. Phosphorylation at Tyr-2267 and/or Tyr-2327 recruits PTPN11. Phosphorylation at Tyr-2267 is required for the interaction with PTPN6 that mediates ROS1 dephosphorylation. Phosphorylation at Tyr-2267 stimulates the kinase activity and the activation of the ERK1 signaling cascade. Expressed by epithelial cells of the caput epididymis (at protein level).

Its subcellular location is the cell membrane. It catalyses the reaction L-tyrosyl-[protein] + ATP = O-phospho-L-tyrosyl-[protein] + ADP + H(+). Its activity is regulated as follows. Inhibited by dephosphorylation by PTPN6. Its function is as follows. Receptor tyrosine kinase (RTK) that plays a role in epithelial cell differentiation and regionalization of the proximal epididymal epithelium. NELL2 is an endogenous ligand for ROS1. Upon endogenous stimulation by NELL2, ROS1 activates the intracellular signaling pathway and triggers epididymal epithelial differentiation and subsequent sperm maturation. May activate several downstream signaling pathways related to cell differentiation, proliferation, growth and survival including the PI3 kinase-mTOR signaling pathway. Mediates the phosphorylation of PTPN11, an activator of this pathway. May also phosphorylate and activate the transcription factor STAT3 to control anchorage-independent cell growth. Mediates the phosphorylation and the activation of VAV3, a guanine nucleotide exchange factor regulating cell morphology. May activate other downstream signaling proteins including AKT1, MAPK1, MAPK3, IRS1, and PLCG2. This chain is Proto-oncogene tyrosine-protein kinase ROS (Ros1), found in Mus musculus (Mouse).